Here is a 182-residue protein sequence, read N- to C-terminus: uncharacterized protein (182 aa).

Residues glutamine 66 to serine 133 adopt a coiled-coil conformation.

This is an uncharacterized protein from Acanthamoeba polyphaga (Amoeba).